The chain runs to 440 residues: MQVLVETTEDLKKRATITLFSDDIEKAIKDKVVKTAKTAKMDGFRKGKVPINLIEQRYGESIQQDILIDFMQDHFSKTILQEKLNLAGRPQYLPGKYIKNENYTYSVEFEVYPEIKLKDLELIEVEKPIVSLNDDDIDKMLEKLRHQKKTWQEIPDLPAEMGDRVTFDFTGSVDGEKFEGGTASDFVMNLGEGNMIPGFEEGIVGHKMSEEFNITLTFPDEYHSESLKGKESQFLIHLKKIEKFQLPEINEEFIKNFDLPEESSIEALRAEIRKNMQRELTKAIRKRIKEQTITSLCDLNKTKVPLSLIEEEIDALRTKAASYSDKKDIIKELPRSVFAEKAESRVLVGLLLTEVIDRNKLTVDENKVQVFLEEIAEAYENPKETIEFYKNNKKLMNNIYNLALEEEAIQVLLKNAKITEKPISFSEFMKQIHETDTAND.

The 86-residue stretch at 162–247 (GDRVTFDFTG…LKKIEKFQLP (86 aa)) folds into the PPIase FKBP-type domain.

It belongs to the FKBP-type PPIase family. Tig subfamily.

The protein resides in the cytoplasm. It catalyses the reaction [protein]-peptidylproline (omega=180) = [protein]-peptidylproline (omega=0). Its function is as follows. Involved in protein export. Acts as a chaperone by maintaining the newly synthesized protein in an open conformation. Functions as a peptidyl-prolyl cis-trans isomerase. This chain is Trigger factor, found in Hamiltonella defensa subsp. Acyrthosiphon pisum (strain 5AT).